Reading from the N-terminus, the 847-residue chain is Protein translocase subunit SecA (847 aa).

ATP-binding positions include Q87, 105–109, and D495; that span reads GEGKT. The segment at 828-847 is disordered; sequence SSNSPSDARNRPIEHDDNAV. Basic and acidic residues predominate over residues 835–847; sequence ARNRPIEHDDNAV.

This sequence belongs to the SecA family. Monomer and homodimer. Part of the essential Sec protein translocation apparatus which comprises SecA, SecYEG and auxiliary proteins SecDF. Other proteins may also be involved.

The protein localises to the cell membrane. It is found in the cytoplasm. It carries out the reaction ATP + H2O + cellular proteinSide 1 = ADP + phosphate + cellular proteinSide 2.. Functionally, part of the Sec protein translocase complex. Interacts with the SecYEG preprotein conducting channel. Has a central role in coupling the hydrolysis of ATP to the transfer of proteins into and across the cell membrane, serving as an ATP-driven molecular motor driving the stepwise translocation of polypeptide chains across the membrane. The protein is Protein translocase subunit SecA of Tropheryma whipplei (strain TW08/27) (Whipple's bacillus).